Consider the following 386-residue polypeptide: Succinate--CoA ligase [ADP-forming] subunit beta (386 aa).

The region spanning 9–244 is the ATP-grasp domain; sequence KALLRAAGIK…TTQEDHRETQ (236 aa). ATP is bound by residues lysine 46, 53–55, glutamate 100, and arginine 103; that span reads GRG. Mg(2+)-binding residues include asparagine 199 and aspartate 213. Substrate is bound by residues asparagine 264 and 321-323; that span reads GIV.

It belongs to the succinate/malate CoA ligase beta subunit family. In terms of assembly, heterotetramer of two alpha and two beta subunits. The cofactor is Mg(2+).

The enzyme catalyses succinate + ATP + CoA = succinyl-CoA + ADP + phosphate. It catalyses the reaction GTP + succinate + CoA = succinyl-CoA + GDP + phosphate. Its pathway is carbohydrate metabolism; tricarboxylic acid cycle; succinate from succinyl-CoA (ligase route): step 1/1. Functionally, succinyl-CoA synthetase functions in the citric acid cycle (TCA), coupling the hydrolysis of succinyl-CoA to the synthesis of either ATP or GTP and thus represents the only step of substrate-level phosphorylation in the TCA. The beta subunit provides nucleotide specificity of the enzyme and binds the substrate succinate, while the binding sites for coenzyme A and phosphate are found in the alpha subunit. This Dichelobacter nodosus (strain VCS1703A) protein is Succinate--CoA ligase [ADP-forming] subunit beta.